Here is a 119-residue protein sequence, read N- to C-terminus: Flagellar transcriptional regulator FlhD (119 aa).

This sequence belongs to the FlhD family. In terms of assembly, homodimer; disulfide-linked. Forms a heterohexamer composed of two FlhC and four FlhD subunits. Each FlhC binds a FlhD dimer, forming a heterotrimer, and a hexamer assembles by dimerization of two heterotrimers.

Its subcellular location is the cytoplasm. Functionally, functions in complex with FlhC as a master transcriptional regulator that regulates transcription of several flagellar and non-flagellar operons by binding to their promoter region. Activates expression of class 2 flagellar genes, including fliA, which is a flagellum-specific sigma factor that turns on the class 3 genes. Also regulates genes whose products function in a variety of physiological pathways. This chain is Flagellar transcriptional regulator FlhD, found in Serratia marcescens.